Reading from the N-terminus, the 313-residue chain is D-apiose import binding protein (313 aa).

Residues 1–26 form the signal peptide; sequence MKLTRRLTLAAFASVLALGTAAPAFS. Residues Asn-39, 115-116, 162-164, Arg-168, Asn-218, Asp-243, and Gln-263 each bind D-apiofuranose; these read DR and DTN.

This sequence belongs to the bacterial solute-binding protein 2 family.

Its subcellular location is the periplasm. Its function is as follows. Part of an ABC transporter complex involved in D-apiose import. This chain is D-apiose import binding protein, found in Rhizobium rhizogenes (strain K84 / ATCC BAA-868) (Agrobacterium radiobacter).